The chain runs to 298 residues: Putative cysteine protease YopT-like blr2058 (298 aa).

A compositionally biased stretch (basic and acidic residues) spans 1-14; that stretch reads MYNRVDGEYAHTEQ. Disordered regions lie at residues 1-25 and 59-80; these read MYNR…ADGS and SDAI…SSSS. The span at 65-80 shows a compositional bias: low complexity; the sequence is SSNTSGLSTSSLSSSS. C109 is a catalytic residue. A compositionally biased stretch (basic and acidic residues) spans 137–162; it reads NHRSAARRQEQSEKLKTQLKEDKAEG. The disordered stretch occupies residues 137 to 166; sequence NHRSAARRQEQSEKLKTQLKEDKAEGSHNF. Active-site residues include H223 and D238.

The protein belongs to the peptidase C58 family.

Potential cysteine protease, which may play a central role after invasion of host cell. The chain is Putative cysteine protease YopT-like blr2058 from Bradyrhizobium diazoefficiens (strain JCM 10833 / BCRC 13528 / IAM 13628 / NBRC 14792 / USDA 110).